Here is an 826-residue protein sequence, read N- to C-terminus: E3 ubiquitin-protein ligase SH3RF1 (826 aa).

Residues 12–53 (CPVCLERLDASAKVLPCQHTFCKRCLLGIVSSRKELRCPECR) form an RING-type zinc finger. The interval 80 to 130 (PRKAGDGGSAGNSTNALRAQGSVTTNGGLNDAQNTQSGQQRIQARSPPVRG) is disordered. A compositionally biased stretch (polar residues) spans 90 to 122 (GNSTNALRAQGSVTTNGGLNDAQNTQSGQQRIQ). SH3 domains are found at residues 132-191 (PQLP…IIKP) and 194-257 (QPPP…FNSA). The tract at residues 266-319 (KPSGADTGEGSSGTSHSGNSQKQADAKKNTKKRHSFTSLTMSNKSSQSVQNRHS) is disordered. Low complexity predominate over residues 273–285 (GEGSSGTSHSGNS). A compositionally biased stretch (polar residues) spans 301–317 (FTSLTMSNKSSQSVQNR). Residues 398 to 459 (ARPSVFIAIY…PGNYVAPVTR (62 aa)) enclose the SH3 3 domain. 2 disordered regions span residues 647 to 694 (NSAA…QTNS) and 725 to 759 (DSVS…CSSL). A compositionally biased stretch (basic and acidic residues) spans 652–663 (KQDKDSKKEKKG). Positions 767 to 826 (RPCERYRVMVSYPPQSEAELELKEGDIVFVHKKREDGWFKGTLQRNGKTGLFPGSFVENI) constitute an SH3 4 domain.

The protein belongs to the SH3RF family. Autoubiquitinated. Ubiquitinated by SH3RF2, leading to proteasome-mediated degradation.

The protein localises to the cytoplasm. The protein resides in the perinuclear region. It is found in the cell projection. It localises to the lamellipodium. Its subcellular location is the golgi apparatus. The protein localises to the trans-Golgi network. The catalysed reaction is S-ubiquitinyl-[E2 ubiquitin-conjugating enzyme]-L-cysteine + [acceptor protein]-L-lysine = [E2 ubiquitin-conjugating enzyme]-L-cysteine + N(6)-ubiquitinyl-[acceptor protein]-L-lysine.. Its pathway is protein modification; protein ubiquitination. Its function is as follows. Has E3 ubiquitin-protein ligase activity. In the absence of an external substrate, it can catalyze self-ubiquitination. Acts as a scaffold protein that contributes to the effective activation of the JNK signaling pathway. Plays an essential role in the anterior neural development. This chain is E3 ubiquitin-protein ligase SH3RF1 (sh3rf1), found in Xenopus laevis (African clawed frog).